The primary structure comprises 33 residues: U-limacoditoxin(13)-As11 (33 aa).

An N-terminal signal peptide occupies residues 1 to 19 (MFKLLLVLALTMLAQSALA). Phe32 is subject to Phenylalanine amide.

The protein belongs to the FARP (FMRFamide related peptide) family. As to expression, expressed by the venom secretory cell of the spine. The spine is a cuticular structure containing a single large nucleated venom-secreting cell at its base. It is an independent unit capable of producing, storing and injecting venom. On the back of A.stimulea caterpillars, spines are grouped together by 50 to 100 to form scoli, of which there are eight.

The protein resides in the secreted. Its function is as follows. Is toxic when injected into Drosophila melanogaster. Also shows a low anthelmintic activity against the parasitic nematode H.contortus (drug susceptible Kirby isolate). The chain is U-limacoditoxin(13)-As11 from Acharia stimulea (Saddleback caterpillar moth).